Here is a 161-residue protein sequence, read N- to C-terminus: 6,7-dimethyl-8-ribityllumazine synthase (161 aa).

5-amino-6-(D-ribitylamino)uracil is bound by residues tryptophan 26, 58–60 (SFE), and 81–83 (VVI). 86–87 (GT) serves as a coordination point for (2S)-2-hydroxy-3-oxobutyl phosphate. Histidine 89 functions as the Proton donor in the catalytic mechanism. Residue phenylalanine 114 coordinates 5-amino-6-(D-ribitylamino)uracil. Arginine 128 is a binding site for (2S)-2-hydroxy-3-oxobutyl phosphate.

Belongs to the DMRL synthase family.

The catalysed reaction is (2S)-2-hydroxy-3-oxobutyl phosphate + 5-amino-6-(D-ribitylamino)uracil = 6,7-dimethyl-8-(1-D-ribityl)lumazine + phosphate + 2 H2O + H(+). Its pathway is cofactor biosynthesis; riboflavin biosynthesis; riboflavin from 2-hydroxy-3-oxobutyl phosphate and 5-amino-6-(D-ribitylamino)uracil: step 1/2. Functionally, catalyzes the formation of 6,7-dimethyl-8-ribityllumazine by condensation of 5-amino-6-(D-ribitylamino)uracil with 3,4-dihydroxy-2-butanone 4-phosphate. This is the penultimate step in the biosynthesis of riboflavin. The protein is 6,7-dimethyl-8-ribityllumazine synthase of Streptomyces avermitilis (strain ATCC 31267 / DSM 46492 / JCM 5070 / NBRC 14893 / NCIMB 12804 / NRRL 8165 / MA-4680).